The following is a 238-amino-acid chain: Probable amino-acid ABC transporter permease protein y4tF (238 aa).

In terms of domain architecture, ABC transmembrane type-1 spans 29-223 (AWVTIQFTLY…GIALVLSFFM (195 aa)). Transmembrane regions (helical) follow at residues 33–53 (IQFT…FGIG), 77–97 (LLVQ…MMGI), 103–123 (PVVA…AEIV), 152–172 (VALP…AIAA), and 203–223 (TVYT…SFFM).

It belongs to the binding-protein-dependent transport system permease family. HisMQ subfamily.

It is found in the cell inner membrane. Its function is as follows. Probably part of the binding-protein-dependent transport system y4tEFGH for an amino acid. Probably responsible for the translocation of the substrate across the membrane. In Sinorhizobium fredii (strain NBRC 101917 / NGR234), this protein is Probable amino-acid ABC transporter permease protein y4tF.